Consider the following 79-residue polypeptide: Translational regulator CsrA (79 aa).

This sequence belongs to the CsrA/RsmA family. Homodimer; the beta-strands of each monomer intercalate to form a hydrophobic core, while the alpha-helices form wings that extend away from the core.

It is found in the cytoplasm. Its function is as follows. A translational regulator that binds mRNA to regulate translation initiation and/or mRNA stability. Usually binds in the 5'-UTR at or near the Shine-Dalgarno sequence preventing ribosome-binding, thus repressing translation. Its main target seems to be the major flagellin gene, while its function is anatagonized by FliW. The chain is Translational regulator CsrA from Geotalea uraniireducens (strain Rf4) (Geobacter uraniireducens).